A 493-amino-acid chain; its full sequence is Glutamate--tRNA ligase (493 aa).

The 'HIGH' region motif lies at 10-20 (PSPTGTPHVGL). Residues 254-258 (KLSKR) carry the 'KMSKS' region motif. Position 257 (K257) interacts with ATP.

The protein belongs to the class-I aminoacyl-tRNA synthetase family. Glutamate--tRNA ligase type 1 subfamily. In terms of assembly, monomer.

It localises to the cytoplasm. It carries out the reaction tRNA(Glu) + L-glutamate + ATP = L-glutamyl-tRNA(Glu) + AMP + diphosphate. In terms of biological role, catalyzes the attachment of glutamate to tRNA(Glu) in a two-step reaction: glutamate is first activated by ATP to form Glu-AMP and then transferred to the acceptor end of tRNA(Glu). The sequence is that of Glutamate--tRNA ligase from Corynebacterium efficiens (strain DSM 44549 / YS-314 / AJ 12310 / JCM 11189 / NBRC 100395).